A 236-amino-acid polypeptide reads, in one-letter code: Uridylate kinase (236 aa).

Lys10–Gly13 is a binding site for ATP. The involved in allosteric activation by GTP stretch occupies residues Gly18–Gly23. Gly52 provides a ligand contact to UMP. Residues Gly53 and Arg57 each contribute to the ATP site. UMP-binding positions include Asp72 and Thr133–Thr140. 3 residues coordinate ATP: Thr160, Tyr166, and Asp169.

It belongs to the UMP kinase family. As to quaternary structure, homohexamer.

Its subcellular location is the cytoplasm. It catalyses the reaction UMP + ATP = UDP + ADP. It participates in pyrimidine metabolism; CTP biosynthesis via de novo pathway; UDP from UMP (UMPK route): step 1/1. Allosterically activated by GTP. Inhibited by UTP. Functionally, catalyzes the reversible phosphorylation of UMP to UDP. This is Uridylate kinase from Chlorobium phaeobacteroides (strain DSM 266 / SMG 266 / 2430).